The sequence spans 123 residues: Zinc metalloproteinase-disintegrin-like jerdohagin (123 aa).

One can recognise a Peptidase M12B domain in the interval 6 to 52 (RYLYIRHDREACTCHANSCIMSAYFSNSHVQYENYINDCKPQCILNE). Position 12 (His12) interacts with Zn(2+). Cysteines 19 and 24 form a disulfide. The Ca(2+) site is built by Cys48 and Asn51. The Disintegrin domain maps to 53 to 80 (LHSWVECESGECCEQCRSECDIAESCTN). 4 cysteine pairs are disulfide-bonded: Cys59/Cys65, Cys64/Cys78, Cys72/Cys90, and Cys106/Cys116. The short motif at 71-73 (ECD) is the D/ECD-tripeptide element.

The protein belongs to the venom metalloproteinase (M12B) family. P-III subfamily. P-IIIa sub-subfamily. In terms of assembly, monomer. Zn(2+) is required as a cofactor. In terms of processing, the N-terminus is blocked. In terms of tissue distribution, expressed by the venom gland.

The protein localises to the secreted. Its activity is regulated as follows. Its proteolytic and hemorrhagic activities are inhibited by EDTA, but not by PMSF. Its function is as follows. Snake venom metalloproteinase that has high hemorrhagic activity and degrades the alpha-chain of fibrinogen (FGA), leaving the beta- and the gamma-chain intact. It may also inhibit platelet aggregation. Cleaves insulin B chain at '25-Phe-|-Val-26', '26-Val-|-Asn-27', '29-His-|-Leu-30', '30-Leu-|-Cys-31', '33-Ser-|-His-34', '35-Leu-|-Val-36', '40-Tyr-|-Leu-41', '41-Leu-|-Val-42', '42-Val-|-Cys-43', '43-Cys-|-Gly-44', '44-Gly-|-Glu-45', '46-Arg-|-Gly-47', '47-Gly-|-Phe-48', '49-Phe-|-Tyr-50' and '52-Pro-|-Lys-53' bonds. Also cleaves human prothrombin (72 kDa) and activation fragment F1 (27 kDa) of activated human prothrombin, to generate two new proteins of 68 and 23 kDa. In Protobothrops jerdonii (Jerdon's pitviper), this protein is Zinc metalloproteinase-disintegrin-like jerdohagin.